We begin with the raw amino-acid sequence, 524 residues long: Translation initiation factor eIF2B subunit delta (524 aa).

Positions 1 to 155 (MAAVAVAVRE…EHTPADDPTL (155 aa)) are disordered. A2 is modified (N-acetylalanine). Basic and acidic residues-rich tracts occupy residues 8–20 (VREE…KTEL) and 31–40 (LTQEEKLQLR). Phosphoserine is present on S12. Basic residues predominate over residues 41–51 (KEKKQQKKKRK). Phosphothreonine is present on T86. Basic and acidic residues predominate over residues 96–121 (SKAELRAERRAKQEAERALKQARKGE). Residues 130 to 140 (CPSTAGETTSG) are compositionally biased toward polar residues. The segment at 171 to 180 (RKDYGSKVSL) is may bind the chemical integrated stress response (ISR) inhibitor ISRIB.

Belongs to the eIF-2B alpha/beta/delta subunits family. As to quaternary structure, component of the translation initiation factor 2B (eIF2B) complex which is a heterodecamer of two sets of five different subunits: alpha, beta, gamma, delta and epsilon. Subunits alpha, beta and delta comprise a regulatory subcomplex and subunits epsilon and gamma comprise a catalytic subcomplex. Within the complex, the hexameric regulatory complex resides at the center, with the two heterodimeric catalytic subcomplexes bound on opposite sides.

Its subcellular location is the cytoplasm. The protein resides in the cytosol. With respect to regulation, activated by the chemical integrated stress response (ISR) inhibitor ISRIB which stimulates guanine nucleotide exchange factor activity for both phosphorylated and unphosphorylated eIF2. Acts as a component of the translation initiation factor 2B (eIF2B) complex, which catalyzes the exchange of GDP for GTP on eukaryotic initiation factor 2 (eIF2) gamma subunit. Its guanine nucleotide exchange factor activity is repressed when bound to eIF2 complex phosphorylated on the alpha subunit, thereby limiting the amount of methionyl-initiator methionine tRNA available to the ribosome and consequently global translation is repressed. This chain is Translation initiation factor eIF2B subunit delta (Eif2b4), found in Mus musculus (Mouse).